We begin with the raw amino-acid sequence, 387 residues long: Alanine racemase (387 aa).

K48 functions as the Proton acceptor; specific for D-alanine in the catalytic mechanism. Residue K48 is modified to N6-(pyridoxal phosphate)lysine. R146 lines the substrate pocket. Residue Y267 is the Proton acceptor; specific for L-alanine of the active site. Position 315 (M315) interacts with substrate.

It belongs to the alanine racemase family. It depends on pyridoxal 5'-phosphate as a cofactor.

It carries out the reaction L-alanine = D-alanine. It functions in the pathway amino-acid biosynthesis; D-alanine biosynthesis; D-alanine from L-alanine: step 1/1. Its function is as follows. Catalyzes the interconversion of L-alanine and D-alanine. May also act on other amino acids. The protein is Alanine racemase (alr) of Methylacidiphilum infernorum (isolate V4) (Methylokorus infernorum (strain V4)).